The primary structure comprises 598 residues: Elongation factor 4 (598 aa).

Positions 4 to 185 (KNIRNFSIIA…TIIAKIPPPK (182 aa)) constitute a tr-type G domain. GTP-binding positions include 16–21 (DHGKST) and 132–135 (NKID).

It belongs to the TRAFAC class translation factor GTPase superfamily. Classic translation factor GTPase family. LepA subfamily.

It localises to the cell membrane. It catalyses the reaction GTP + H2O = GDP + phosphate + H(+). Functionally, required for accurate and efficient protein synthesis under certain stress conditions. May act as a fidelity factor of the translation reaction, by catalyzing a one-codon backward translocation of tRNAs on improperly translocated ribosomes. Back-translocation proceeds from a post-translocation (POST) complex to a pre-translocation (PRE) complex, thus giving elongation factor G a second chance to translocate the tRNAs correctly. Binds to ribosomes in a GTP-dependent manner. This Mycoplasma genitalium (strain ATCC 33530 / DSM 19775 / NCTC 10195 / G37) (Mycoplasmoides genitalium) protein is Elongation factor 4.